A 677-amino-acid chain; its full sequence is Protein asunder (677 aa).

A coiled-coil region spans residues 515–540 (RLKLSKAKDQYRLLYRELEQLIQLNS). The segment covering 578 to 598 (ESPLSPERLEPTSSSSSNSLL) has biased composition (low complexity). Residues 578 to 604 (ESPLSPERLEPTSSSSSNSLLKARKRR) are disordered. The Nuclear localization signal (NLS) motif lies at 598-604 (LKARKRR).

The protein belongs to the Integrator subunit 13 family. As to quaternary structure, belongs to the multiprotein complex Integrator, at least composed of IntS1, IntS2, IntS3, IntS4, omd/IntS5, IntS6, defl/IntS7, IntS8, IntS9, IntS10, IntS11, IntS12, asun/IntS13, IntS14 and IntS15. The core complex associates with protein phosphatase 2A subunits mts/PP2A and Pp2A-29B, to form the Integrator-PP2A (INTAC) complex. Phosphorylated.

It localises to the nucleus. It is found in the cytoplasm. Its subcellular location is the perinuclear region. Functionally, component of the integrator complex, a multiprotein complex that terminates RNA polymerase II (Pol II) transcription in the promoter-proximal region of genes. The integrator complex provides a quality checkpoint during transcription elongation by driving premature transcription termination of transcripts that are unfavorably configured for transcriptional elongation: the complex terminates transcription by (1) catalyzing dephosphorylation of the C-terminal domain (CTD) of Pol II subunit Polr2A/Rbp1 and Spt5, and (2) degrading the exiting nascent RNA transcript via endonuclease activity. The integrator complex is also involved in the 3'-end processing of the U7 snRNA, and also the spliceosomal snRNAs U1, U2, U4 and U5. This Drosophila willistoni (Fruit fly) protein is Protein asunder (asun).